The sequence spans 1345 residues: CRISPR-associated endonuclease Cas9 (1345 aa).

Aspartate 10 serves as the catalytic For RuvC-like nuclease domain. The Mg(2+) site is built by aspartate 10, glutamate 762, and glutamate 766. The HNH Cas9-type domain maps to threonine 770–leucine 921. The active-site Proton acceptor for HNH nuclease domain is histidine 840. Mg(2+) is bound at residue histidine 983.

The protein belongs to the CRISPR-associated protein Cas9 family. Subtype II-A subfamily. As to quaternary structure, monomer. Binds crRNA and tracrRNA. It depends on Mg(2+) as a cofactor.

In terms of biological role, CRISPR (clustered regularly interspaced short palindromic repeat) is an adaptive immune system that provides protection against mobile genetic elements (viruses, transposable elements and conjugative plasmids). CRISPR clusters contain spacers, sequences complementary to antecedent mobile elements, and target invading nucleic acids. CRISPR clusters are transcribed and processed into CRISPR RNA (crRNA). In type II CRISPR systems correct processing of pre-crRNA requires a trans-encoded small RNA (tracrRNA), endogenous ribonuclease 3 (rnc) and this protein. The tracrRNA serves as a guide for ribonuclease 3-aided processing of pre-crRNA. Subsequently Cas9/crRNA/tracrRNA endonucleolytically cleaves linear or circular dsDNA target complementary to the spacer; Cas9 is inactive in the absence of the 2 guide RNAs (gRNA). Cas9 recognizes the protospacer adjacent motif (PAM) in the CRISPR repeat sequences to help distinguish self versus nonself, as targets within the bacterial CRISPR locus do not have PAMs. PAM recognition is also required for catalytic activity. Complements the gRNA coprocessing defect in a cas9 deletion in S.pyogenes strain 370 and cuts target plasmid in Cas9:gRNAs mixing experiments with S.thermophilus CRISPR3 from strain LMD-9. In Streptococcus mutans serotype c (strain ATCC 700610 / UA159), this protein is CRISPR-associated endonuclease Cas9.